We begin with the raw amino-acid sequence, 136 residues long: Large ribosomal subunit protein uL16 (136 aa).

It belongs to the universal ribosomal protein uL16 family. Part of the 50S ribosomal subunit.

Functionally, binds 23S rRNA and is also seen to make contacts with the A and possibly P site tRNAs. The protein is Large ribosomal subunit protein uL16 of Edwardsiella ictaluri (strain 93-146).